The primary structure comprises 90 residues: Elongation factor 1-beta (90 aa).

The protein belongs to the EF-1-beta/EF-1-delta family.

In terms of biological role, promotes the exchange of GDP for GTP in EF-1-alpha/GDP, thus allowing the regeneration of EF-1-alpha/GTP that could then be used to form the ternary complex EF-1-alpha/GTP/AAtRNA. The polypeptide is Elongation factor 1-beta (Staphylothermus marinus (strain ATCC 43588 / DSM 3639 / JCM 9404 / F1)).